The following is a 1499-amino-acid chain: Rho GTPase-activating protein 35 (1499 aa).

Positions 1–266 are has GTPase activity, required for proper localization; the sequence is MMMARKQDVR…IPYFEALKQQ (266 aa). GTP is bound by residues lysine 28, 33–37, leucine 52, serine 56, 95–97, 201–203, and 229–231; these read IGKSC, EQT, KCD, and SAR. FF domains follow at residues 270-327, 368-422, 429-483, and 485-550; these read IATA…HIHR, KLLE…HLEK, RAEM…HQKQ, and IDRA…HIHF. Position 308 is a phosphotyrosine (tyrosine 308). At serine 589 the chain carries Phosphoserine. Residues 592 to 767 enclose the pG1 pseudoGTPase domain; it reads DLNIDRINLV…LLDSKRNLNL (176 aa). Phosphoserine is present on residues serine 770 and serine 773. The region spanning 783-947 is the pG2 pseudoGTPase domain; sequence RIVMCLMCGD…FKDVVEKKNI (165 aa). Phosphoserine occurs at positions 970, 975, 985, and 1072. Tyrosine 1087 bears the Phosphotyrosine mark. Position 1105 is a phosphotyrosine; by ABL2 and PTK6 (tyrosine 1105). Positions 1124–1141 are enriched in polar residues; sequence KAQSNGSGNGSDSEMDTS. Positions 1124–1148 are disordered; the sequence is KAQSNGSGNGSDSEMDTSSLERGRK. Residues serine 1134, serine 1142, serine 1150, serine 1176, serine 1179, and serine 1221 each carry the phosphoserine modification. The segment at 1177–1207 is disordered; sequence VGSDDELGPIRKKEEDQASQGYKGDNAVIPY. Residues 1213–1236 are required for phospholipid binding and regulation of the substrate preference; it reads PRRRNILRSLRRNTKKPKPKPRPS. Threonine 1226 carries the post-translational modification Phosphothreonine. Phosphoserine is present on serine 1236. In terms of domain architecture, Rho-GAP spans 1249–1436; sequence VPLTTVVTPE…LFIQQCPFFF (188 aa). The tract at residues 1446–1499 is disordered; that stretch reads GAAPGSPSAMAPTVPFLTSTPATSQPSPPQSPPPTPQSPMQPLLSSQLQAEHTL. Over residues 1448-1470 the composition is skewed to low complexity; sequence APGSPSAMAPTVPFLTSTPATSQ. A compositionally biased stretch (pro residues) spans 1471-1484; the sequence is PSPPQSPPPTPQSP. 2 positions are modified to phosphoserine: serine 1472 and serine 1476. The residue at position 1480 (threonine 1480) is a Phosphothreonine. At serine 1483 the chain carries Phosphoserine. The segment covering 1485-1499 has biased composition (low complexity); sequence MQPLLSSQLQAEHTL.

In terms of assembly, interacts with the general transcription factor GTF2I, the interaction sequesters GTF2I in the cytoplasm. Interacts with RASA1. Post-translationally, phosphorylation of Tyr-1105 by PTK6 promotes the association with RASA1, inactivating RHOA while activating RAS. Phosphorylation at Tyr-308 by PDGFRA inhibits binding to GTF2I. Phosphorylated by PRKCA at Ser-1221 and Thr-1226, induces relocalization from the cytoplasm to regions of plasma membrane ruffling and prevents the binding and substrate specificity regulation by phospholipids. In brain, phosphorylated by FYN and SRC. During focal adhesion formation, phosphorylated by MAPK1 and MAPK3 at the C-terminal region, probably at Ser-1451, Ser-1476, Thr-1480 and Ser-1483. Phosphorylation by MAPK1 and MAPK3 inhibits GAP function and localizes ARGHAP35 away from newly forming focal adhesions and stress fibers in cells spreading on fibronectin. Phosphorylation at Ser-1476 and Thr-1480 by GSK3B requires priming by MAPK and inhibits RhoGAP activity and modulates polarized cell migration. As to expression, expressed in the developing kidneys. Expressed in all regions of the mature nervous system (at protein level). Detected in neutrophils (at protein level).

It localises to the cytoplasm. It is found in the cytoskeleton. Its subcellular location is the cilium basal body. The protein localises to the nucleus. The protein resides in the cell membrane. Its function is as follows. Rho GTPase-activating protein (GAP). Binds several acidic phospholipids which inhibits the Rho GAP activity to promote the Rac GAP activity. This binding is inhibited by phosphorylation by PRKCA. Involved in cell differentiation as well as cell adhesion and migration, plays an important role in retinal tissue morphogenesis, neural tube fusion, midline fusion of the cerebral hemispheres and mammary gland branching morphogenesis. Transduces signals from p21-ras to the nucleus, acting via the ras GTPase-activating protein (GAP). Transduces SRC-dependent signals from cell-surface adhesion molecules, such as laminin, to promote neurite outgrowth. Regulates axon outgrowth, guidance and fasciculation. Modulates Rho GTPase-dependent F-actin polymerization, organization and assembly, is involved in polarized cell migration and in the positive regulation of ciliogenesis and cilia elongation. During mammary gland development, is required in both the epithelial and stromal compartments for ductal outgrowth. Represses transcription of the glucocorticoid receptor by binding to the cis-acting regulatory sequence 5'-GAGAAAAGAAACTGGAGAAACTC-3'; this function is however unclear and would need additional experimental evidences. The protein is Rho GTPase-activating protein 35 of Mus musculus (Mouse).